Here is a 345-residue protein sequence, read N- to C-terminus: Adenosine kinase 2 (345 aa).

Aspartate 300 is an active-site residue.

Belongs to the carbohydrate kinase PfkB family. As to quaternary structure, interacts with the begomovirus AL2 protein and the curtovirus L2 protein. Interacts with KIN11. It depends on Mg(2+) as a cofactor. Phosphorylated by KIN11. As to expression, widely expressed.

It localises to the cytoplasm. The catalysed reaction is adenosine + ATP = AMP + ADP + H(+). Its pathway is purine metabolism; AMP biosynthesis via salvage pathway; AMP from adenosine: step 1/1. Inactivated by the begomovirus AL2 protein or the curtovirus L2 protein. ATP dependent phosphorylation of adenosine and other related nucleoside analogs to monophosphate derivatives. Essential to sustain methyl recycling. In Arabidopsis thaliana (Mouse-ear cress), this protein is Adenosine kinase 2.